A 78-amino-acid chain; its full sequence is D-alanyl carrier protein (78 aa).

Residues 1–78 (MDFKQEVLDV…NIVNQLSELK (78 aa)) form the Carrier domain. At S36 the chain carries O-(pantetheine 4'-phosphoryl)serine.

It belongs to the DltC family. Post-translationally, 4'-phosphopantetheine is transferred from CoA to a specific serine of apo-DCP.

The protein resides in the cytoplasm. It functions in the pathway cell wall biogenesis; lipoteichoic acid biosynthesis. Functionally, carrier protein involved in the D-alanylation of lipoteichoic acid (LTA). The loading of thioester-linked D-alanine onto DltC is catalyzed by D-alanine--D-alanyl carrier protein ligase DltA. The DltC-carried D-alanyl group is further transferred to cell membrane phosphatidylglycerol (PG) by forming an ester bond, probably catalyzed by DltD. D-alanylation of LTA plays an important role in modulating the properties of the cell wall in Gram-positive bacteria, influencing the net charge of the cell wall. The sequence is that of D-alanyl carrier protein from Bacillus subtilis (strain 168).